The sequence spans 148 residues: MSKVLILFGSSTGNTESIAQKLEELVAAGGHEVTLLNAAEASADNLADGYDAVLMGCSAWGMEDLELQDDFAPLFDEMENMGLKGKKLAAFASGDMEYEHYCGAVPAIEEKARGLGAEVICEGLKIEGDASSDPDAVSAFAEDVLKKL.

Positions 4 to 145 (VLILFGSSTG…AVSAFAEDVL (142 aa)) constitute a Flavodoxin-like domain.

Belongs to the flavodoxin family. Requires FMN as cofactor.

Low-potential electron donor to a number of redox enzymes. In Desulfovibrio desulfuricans (strain ATCC 27774 / DSM 6949 / MB), this protein is Flavodoxin.